A 101-amino-acid chain; its full sequence is Small ribosomal subunit protein uS14 (101 aa).

The protein belongs to the universal ribosomal protein uS14 family. In terms of assembly, part of the 30S ribosomal subunit. Contacts proteins S3 and S10.

Binds 16S rRNA, required for the assembly of 30S particles and may also be responsible for determining the conformation of the 16S rRNA at the A site. This is Small ribosomal subunit protein uS14 from Pseudomonas aeruginosa (strain LESB58).